We begin with the raw amino-acid sequence, 233 residues long: MADS-box transcription factor 20 (233 aa).

The MADS-box domain maps to 1 to 61 (MGRGKVQVRR…GNLFHYASSH (61 aa)). Positions 91 to 184 (EGSMSYDHIK…PTKAAAPPAC (94 aa)) constitute a K-box domain.

As to expression, expressed in developing seeds and seedling shoots.

The protein localises to the nucleus. Functionally, probable transcription factor. In Oryza sativa subsp. japonica (Rice), this protein is MADS-box transcription factor 20 (MADS20).